The sequence spans 560 residues: Vanillyl-alcohol oxidase (560 aa).

The FAD-binding PCMH-type domain maps to 67-272 (DYFLASAIVA…TKIGIWLMPN (206 aa)). Y108 is an active-site residue. Position 422 is a tele-8alpha-FAD histidine (H422). Active-site residues include Y503 and R504.

This sequence to bacterial flavocytochrome p-cresol methyl hydroxylase. In terms of assembly, homooctamer (tetramer of tightly interacting dimers). It depends on FAD as a cofactor.

It is found in the peroxisome. The protein resides in the cytoplasm. The enzyme catalyses 4-hydroxy-3-methoxy-benzenemethanol + O2 = vanillin + H2O2. Competitively inhibited by cinnamyl and coniferyl alcohols and by isoeugenol. Its function is as follows. Catalyzes the conversion of vanillin alcohol to vanillin, and also the conversion of a wide range of phenolic compounds bearing side chains of variable size at the para position of the aromatic ring. Crucial for the degradation of the secondary metabolites derived from the degradation of the lignin. Catalyzes besides the oxidation of 4-hydroxybenzyl alcohols, the oxidative deamination of 4-hydroxybenzylamines, the oxidative demethylation of 4-(methoxy-methyl)phenols and the oxidative hydration of 4-allylphenols. Most active with 4-allylphenols. This chain is Vanillyl-alcohol oxidase (VAOA), found in Penicillium simplicissimum.